Consider the following 621-residue polypeptide: SH2B adapter protein 2 (621 aa).

Phosphotyrosine is present on Tyr-47. Ser-130 bears the Phosphoserine mark. The interval 144-165 (RASPEPEGGATPKTTEPVSEPR) is disordered. The region spanning 186 to 299 (DIQREGALRF…WVADIQGCVD (114 aa)) is the PH domain. Ser-303 carries the post-translational modification Phosphoserine. The 99-residue stretch at 409 to 507 (WFHGTLSRVK…SADITLRSYV (99 aa)) folds into the SH2 domain. Disordered stretches follow at residues 507–528 (VRAQGPPPDPGPAPNTAAPVPA) and 548–609 (PPTS…ATLG). Residues 552–570 (PSNGAGASSSSGSSSSATS) are compositionally biased toward low complexity. The residue at position 597 (Ser-597) is a Phosphoserine. Tyr-618 bears the Phosphotyrosine mark.

Belongs to the SH2B adapter family. Homodimer. Interacts with KIT/c-KIT, SHC1, EPOR, PDGFR, VAV1 and VAV3. Interacts (via N-terminal region) with SHC1. Interacts (via the phosphorylated C-terminus) with GRB2. Interacts (via its SH2 domain) with EPOR, INSR and KIT. Interacts with GRB2 after B-cell antigen receptor stimulation. Interacts (via PH domain) with VAV3. Interacts with NTRK1, NTRK2 and NTRK3 (phosphorylated); after stimulation of the receptor by its extracellular ligand and subsequent autophosphorylation of the receptor. Binds INSR, GRB2, ASB6 and CAP. Insulin stimulation leads to dissociation of CAP. Binds CBS only when SH2B2/APS has become phosphorylated. INSR binding does not depend on the phosphorylation of SH2B2/APS. Post-translationally, phosphorylated on a tyrosine residue by NTRK1, NTRK2, NTRK3 and INSR after stimulation of the receptor by its extracellular ligand. Tyrosine phosphorylated by JAK2, KIT and other kinases activated by B-cell receptor in response to stimulation with cytokines, IL3, IL5, PDGF, IGF1, IGF2, CSF2/GM-CSF and cross-linking of the B-cell receptor complex. In terms of tissue distribution, detected in embryonic brain, spinal cord and cortical neurons.

It localises to the cytoplasm. Its subcellular location is the membrane. Functionally, adapter protein for several members of the tyrosine kinase receptor family. Involved in multiple signaling pathways. Binds to EPOR and suppresses EPO-induced STAT5 activation, possibly through a masking effect on STAT5 docking sites in EPOR. Suppresses PDGF-induced mitogenesis. Involved in stimulation of glucose uptake by insulin. Involved in coupling from immunoreceptor to Ras signaling. Acts as a negative regulator of cytokine signaling in collaboration with CBL. Induces cytoskeletal reorganization and neurite outgrowth in cultured neurons. The sequence is that of SH2B adapter protein 2 (Sh2b2) from Rattus norvegicus (Rat).